We begin with the raw amino-acid sequence, 243 residues long: Proteasome subunit beta (243 aa).

Basic and acidic residues-rich tracts occupy residues 1–11 (MRTPTHDEFSG) and 33–47 (NADR…KETK). Residues 1–49 (MRTPTHDEFSGRLDSLNGDRSNVFGPELGEFSNADRRADELGDKETKTG) constitute a propeptide, removed in mature form; by autocatalysis. Residues 1–50 (MRTPTHDEFSGRLDSLNGDRSNVFGPELGEFSNADRRADELGDKETKTGT) are disordered. The Nucleophile role is filled by Thr-50. A Phosphoserine modification is found at Ser-129.

This sequence belongs to the peptidase T1B family. As to quaternary structure, the 20S proteasome core is composed of 14 alpha and 14 beta subunits that assemble into four stacked heptameric rings, resulting in a barrel-shaped structure. The two inner rings, each composed of seven catalytic beta subunits, are sandwiched by two outer rings, each composed of seven alpha subunits. H.volcanii produces at least 2 types of 20S proteasomes: an alpha1-beta proteasome and a proteasome containing all three subunits (alpha1, alpha2, and beta) that appears to be asymmetrical with homo-oligomeric alpha1 and alpha2 rings positioned on separate ends. The catalytic chamber with the active sites is on the inside of the barrel. Has probably a gated structure, the ends of the cylinder being occluded by the N-termini of the alpha-subunits. Is likely capped at one or both ends by the proteasome regulatory ATPase, PAN.

The protein resides in the cytoplasm. The catalysed reaction is Cleavage of peptide bonds with very broad specificity.. Its activity is regulated as follows. The formation of the proteasomal ATPase PAN-20S proteasome complex, via the docking of the C-termini of PAN into the intersubunit pockets in the alpha-rings, triggers opening of the gate for substrate entry. Interconversion between the open-gate and close-gate conformations leads to a dynamic regulation of the 20S proteasome proteolysis activity. In vitro, the chymotrypsin-like activity of the alpha1-beta proteasome is potently inhibited by carbobenzoxyl-leucinyl-leucinyl-leucinal-H (MG132) and significantly by N-acetyl-leucinyl-leucinyl-norleucinal-H (calpain inhibitor I). In terms of biological role, component of the proteasome core, a large protease complex with broad specificity involved in protein degradation. The H.volcanii alpha1-beta proteasome is able to cleave oligopeptides after Phe, Tyr and Trp, poorly after Glu but not after Arg. Thus, displays chymotrypsin-like activity, low caspase-like activity but no trypsin-like activity. The protein is Proteasome subunit beta of Haloferax volcanii (strain ATCC 29605 / DSM 3757 / JCM 8879 / NBRC 14742 / NCIMB 2012 / VKM B-1768 / DS2) (Halobacterium volcanii).